The sequence spans 318 residues: Endochitinase 1 (318 aa).

An N-terminal signal peptide occupies residues 1-18 (EFTTLFLLFSVLLLSASA). Positions 19 to 60 (EQCGSQAGGALCASGLCCSKFGWCGDTNDYCGPGNCQSQCPG) constitute a Chitin-binding type-1 domain. Cystine bridges form between C21-C36, C30-C42, C35-C49, C54-C58, C89-C152, C164-C172, and C271-C303. E134 acts as the Proton donor in catalysis. A propeptide spans 312-318 (GLLVDTM) (removed in mature form, vacuolar targeting).

This sequence belongs to the glycosyl hydrolase 19 family. Chitinase class I subfamily.

It localises to the vacuole. It carries out the reaction Random endo-hydrolysis of N-acetyl-beta-D-glucosaminide (1-&gt;4)-beta-linkages in chitin and chitodextrins.. In terms of biological role, defense against chitin-containing fungal pathogens. This is Endochitinase 1 (CHTB1) from Solanum tuberosum (Potato).